Consider the following 254-residue polypeptide: Small ribosomal subunit protein uS2 (254 aa).

Belongs to the universal ribosomal protein uS2 family.

In Legionella pneumophila (strain Lens), this protein is Small ribosomal subunit protein uS2.